A 354-amino-acid chain; its full sequence is Methionine import ATP-binding protein MetN (354 aa).

The ABC transporter domain maps to 8–250; that stretch reads LDHIDITFRQ…PKEALTQEFI (243 aa). 42-49 is an ATP binding site; that stretch reads GYSGAGKS.

The protein belongs to the ABC transporter superfamily. Methionine importer (TC 3.A.1.24) family. The complex is composed of two ATP-binding proteins (MetN), two transmembrane proteins (MetI) and a solute-binding protein (MetQ).

The protein resides in the cell membrane. The catalysed reaction is L-methionine(out) + ATP + H2O = L-methionine(in) + ADP + phosphate + H(+). It carries out the reaction D-methionine(out) + ATP + H2O = D-methionine(in) + ADP + phosphate + H(+). Functionally, part of the ABC transporter complex MetNIQ involved in methionine import. Responsible for energy coupling to the transport system. The protein is Methionine import ATP-binding protein MetN of Streptococcus pyogenes serotype M3 (strain ATCC BAA-595 / MGAS315).